A 319-amino-acid polypeptide reads, in one-letter code: Probable enoyl-CoA hydratase alpha subunit (319 aa).

Residues 199 to 298 (FEAAKQRRLV…EIGMPVVLDW (100 aa)) form a DUF35 region.

This sequence belongs to the thioester dehydratase family. In terms of assembly, heterodimer composed of ChsH1 and ChsH2. Two heterodimers combine to form a heterotetramer. The complex interacts with Ltp2 via the DUF35 C-terminal region of ChsH2.

Functionally, probably involved in bile acid degradation. The chain is Probable enoyl-CoA hydratase alpha subunit from Thermomonospora curvata (strain ATCC 19995 / DSM 43183 / JCM 3096 / KCTC 9072 / NBRC 15933 / NCIMB 10081 / Henssen B9).